Consider the following 637-residue polypeptide: tRNA uridine 5-carboxymethylaminomethyl modification enzyme MnmG (637 aa).

18-23 contributes to the FAD binding site; it reads GAGHAG. 281 to 295 is a binding site for NAD(+); it reads GPRYCPSIEDKIVRF.

The protein belongs to the MnmG family. In terms of assembly, homodimer. Heterotetramer of two MnmE and two MnmG subunits. It depends on FAD as a cofactor.

It localises to the cytoplasm. NAD-binding protein involved in the addition of a carboxymethylaminomethyl (cmnm) group at the wobble position (U34) of certain tRNAs, forming tRNA-cmnm(5)s(2)U34. The polypeptide is tRNA uridine 5-carboxymethylaminomethyl modification enzyme MnmG (Ligilactobacillus salivarius (strain UCC118) (Lactobacillus salivarius)).